We begin with the raw amino-acid sequence, 87 residues long: MMKTKSEVLIFFFTLVLLLSMASSVILREDGFAPPKPSPTTHEKASTKGDRDGVECKNSDSEEECLVKKTVAAHTDYIYTQDLNLSP.

Residues 1 to 24 (MMKTKSEVLIFFFTLVLLLSMASS) form the signal peptide. Positions 25–76 (VILREDGFAPPKPSPTTHEKASTKGDRDGVECKNSDSEEECLVKKTVAAHTD) are excised as a propeptide. The tract at residues 31-59 (GFAPPKPSPTTHEKASTKGDRDGVECKNS) is disordered. Residues 41–59 (THEKASTKGDRDGVECKNS) are compositionally biased toward basic and acidic residues. Residues tyrosine 77 and tyrosine 79 each carry the sulfotyrosine modification. The propeptide occupies 82–87 (DLNLSP).

The protein belongs to the phytosulfokine family. Post-translationally, sulfation is important for activity and for the binding to a putative membrane receptor. PSK-beta is produced from PSK-alpha by exopeptidase digestion. Expressed only in roots.

The protein localises to the secreted. Promotes plant cell differentiation, organogenesis and somatic embryogenesis as well as cell proliferation. The chain is Phytosulfokines 1 (PSK1) from Arabidopsis thaliana (Mouse-ear cress).